The primary structure comprises 332 residues: ATPase GET3 (332 aa).

32–39 (KGGVGKTT) serves as a coordination point for ATP. Asp61 is a catalytic residue. ATP-binding residues include Glu235 and Asn262. 2 residues coordinate Zn(2+): Cys273 and Cys276.

Belongs to the arsA ATPase family. Homodimer.

Its subcellular location is the cytoplasm. The protein resides in the endoplasmic reticulum. ATPase required for the post-translational delivery of tail-anchored (TA) proteins to the endoplasmic reticulum. Recognizes and selectively binds the transmembrane domain of TA proteins in the cytosol. This complex then targets to the endoplasmic reticulum by membrane-bound receptors, where the tail-anchored protein is released for insertion. This process is regulated by ATP binding and hydrolysis. ATP binding drives the homodimer towards the closed dimer state, facilitating recognition of newly synthesized TA membrane proteins. ATP hydrolysis is required for insertion. Subsequently, the homodimer reverts towards the open dimer state, lowering its affinity for the membrane-bound receptor, and returning it to the cytosol to initiate a new round of targeting. The protein is ATPase GET3 of Mycosarcoma maydis (Corn smut fungus).